Here is a 69-residue protein sequence, read N- to C-terminus: Amphipathic peptide OcyC2 (69 aa).

Residues 1–23 form the signal peptide; that stretch reads MKTQFAILMIAVVLMQMLVQTEG. Residue I37 is modified to Isoleucine amide. Positions 41-69 are excised as a propeptide; the sequence is GLKKLDQLDDTFDSDLSDADVKLLREMFK.

The protein belongs to the non-disulfide-bridged peptide (NDBP) superfamily. Short antimicrobial peptide (group 4) family. As to expression, expressed by the venom gland.

The protein localises to the secreted. It is found in the target cell membrane. Its function is as follows. Amphipathic peptide with antimicrobial activity. Shows antifungal activity with MIC values ranging from 25 to 200 uM. Does not show antifungal activity against Candida glabrata (ATCC90030) and Candida parapsilosis (ATCC22019) (MIC&gt;400 uM). The chain is Amphipathic peptide OcyC2 from Opisthacanthus cayaporum (South American scorpion).